The following is a 324-amino-acid chain: Probable UDP-sugar transporter protein SLC35A4 (324 aa).

The Cytoplasmic segment spans residues 1 to 18 (MSVEDGGLPGLGGPGQAR). The helical transmembrane segment at 19-39 (WTLMLLLSTATYGAHAPLLAL) threads the bilayer. Topologically, residues 40 to 52 (CHVDGRVPFRPSS) are lumenal. A helical membrane pass occupies residues 53 to 73 (AVLLTELTKLLLCALSLLVGW). The Cytoplasmic portion of the chain corresponds to 74–85 (QAWPPRTPPWRQ). The helical transmembrane segment at 86–106 (AAPFALSALLYGANNNLVIHL) threads the bilayer. At 107–140 (QHYMDPSTYQVLSNLKIGSTALFYCLCLRRRLSA) the chain is on the lumenal side. The chain crosses the membrane as a helical span at residues 141–161 (RQGLALLLLMAAGACYAAGGL). Topologically, residues 162–177 (RDPGSPLPESPSTAAS) are cytoplasmic. The chain crosses the membrane as a helical span at residues 178-198 (GPVPLHVTAPGLLLLLLYCLI). Topologically, residues 199 to 214 (SGLSSVYTELLLKRQR) are lumenal. A helical membrane pass occupies residues 215-235 (LPLALQNLFLYTFGVLLNLGL). At 236–248 (HAGGGPGPGLLEG) the chain is on the cytoplasmic side. Residues 249-271 (FSGWAALVVLSQALNGLLMSAVM) form a helical membrane-spanning segment. Topologically, residues 272 to 279 (KHGSSITR) are lumenal. A helical transmembrane segment spans residues 280–300 (LFVVSCSLVVNAVLSAALLRL). Residues 301–324 (QLTAAFFLAALLIGLAVHLYYGSR) lie on the Cytoplasmic side of the membrane.

This sequence belongs to the nucleotide-sugar transporter family. SLC35A subfamily. Found in a complex with SLC35A2 and SLC35A3.

It is found in the golgi apparatus membrane. It catalyses the reaction CDP-L-ribitol(in) + CDP(out) = CDP-L-ribitol(out) + CDP(in). In terms of biological role, mediates the transport of CDP-ribitol. Does not exhibit CMP-sialic acid, UDP-galactose and UDP-N-acetylglucosamine transport activity. The sequence is that of Probable UDP-sugar transporter protein SLC35A4 from Sus scrofa (Pig).